The following is a 459-amino-acid chain: Septin-4 (459 aa).

4 positions are modified to phosphoserine: Ser10, Ser49, Ser98, and Ser99. Disordered regions lie at residues 18–52 (FVKDFPGSEPCHPTESKTRVARPQILEPRPQSPDL) and 70–98 (SQQYFCPPAPLSPSSRPRSPWGKLDPYDS). Positions 122 to 395 (KGFDFTLMVA…ENYRAQCIQS (274 aa)) constitute a Septin-type G domain. The G1 motif stretch occupies residues 132–139 (GESGLGKS). GTP-binding positions include 132–139 (GESGLGKS) and Thr166. The tract at residues 189-192 (DTPG) is G3 motif. The tract at residues 270-273 (AKAD) is G4 motif. Residue 271 to 279 (KADTLTPSE) participates in GTP binding. Ser306 bears the Phosphoserine mark. Residues Gly329 and Arg344 each contribute to the GTP site. Residues 410–430 (TRESGTDFPIPAVPPGTDPET) are disordered. Ser413 carries the phosphoserine modification. Thr415 bears the Phosphothreonine mark. Positions 434 to 459 (IREKDEELRRMQEMLHKIQRQMKETH) form a coiled coil.

This sequence belongs to the TRAFAC class TrmE-Era-EngA-EngB-Septin-like GTPase superfamily. Septin GTPase family. In terms of assembly, septins polymerize into heterooligomeric protein complexes that form filaments, and can associate with cellular membranes, actin filaments and microtubules. GTPase activity is required for filament formation. Interacts with SEPTIN8. Component of a septin core octameric complex consisting of SEPTIN12, SEPTIN7, SEPTIN6 and SEPTIN2 or SEPTIN4 in the order 12-7-6-2-2-6-7-12 or 12-7-6-4-4-6-7-12. Interacts with SEPTIN14 (via C-terminus). Interacts with DYRK1A. Interacts with SLC6A3/DAT and SNCA/alpha-synuclein. Interacts with STX1A; in the striatum. Interacts with XIAP (via BIR3 domain) following the induction of apoptosis. Interacts with AREL1 (via HECT domain); in the cytoplasm following induction of apoptosis. Post-translationally, phosphorylated by DYRK1A.

The protein resides in the cytoplasm. It is found in the cell projection. The protein localises to the cilium. Its subcellular location is the flagellum. It localises to the cytoplasmic vesicle. The protein resides in the secretory vesicle. It is found in the axon. The protein localises to the dendrite. Its subcellular location is the perikaryon. Filament-forming cytoskeletal GTPase. Pro-apoptotic protein involved in LGR5-positive intestinal stem cell and Paneth cell expansion in the intestines, via its interaction with XIAP. May also play a role in the regulation of cell fate in the intestine. Positive regulator of apoptosis involved in hematopoietic stem cell homeostasis; via its interaction with XIAP. Negative regulator of repair and hair follicle regeneration in response to injury, due to inhibition of hair follicle stem cell proliferation, potentially via its interaction with XIAP. Plays an important role in male fertility and sperm motility. During spermiogenesis, essential for the establishment of the annulus (a fibrous ring structure connecting the midpiece and the principal piece of the sperm flagellum) which is a requisite for the structural and mechanical integrity of the sperm. Involved in the migration of cortical neurons and the formation of neuron leading processes during embryonic development. Required for dopaminergic metabolism in presynaptic autoreceptors; potentially via activity as a presynaptic scaffold protein. The polypeptide is Septin-4 (Rattus norvegicus (Rat)).